The primary structure comprises 200 residues: Transcription elongation factor A protein-like 6 (200 aa).

Positions 1–200 are disordered; it reads MEKPYNKNEG…QRGLHDIPYL (200 aa). Residues 20–36 are compositionally biased toward acidic residues; it reads DEVEPDDEGKSDEEEKP. Serine 30 is subject to Phosphoserine. Basic and acidic residues-rich tracts occupy residues 37–52, 60–80, and 115–154; these read DAEG…KAEG, LEDK…KPQG, and DRGT…EELR. Serine 65 is modified (phosphoserine).

It belongs to the TFS-II family. TFA subfamily.

Its subcellular location is the nucleus. In terms of biological role, may be involved in transcriptional regulation. This chain is Transcription elongation factor A protein-like 6 (TCEAL6), found in Homo sapiens (Human).